The sequence spans 170 residues: Protein GrpE (170 aa).

The tract at residues 1–29 is disordered; the sequence is MSEEIKNEEIVEEVEATEEVVETPEKSEL. Acidic residues predominate over residues 10 to 22; it reads IVEEVEATEEVVE.

The protein belongs to the GrpE family. As to quaternary structure, homodimer.

It is found in the cytoplasm. In terms of biological role, participates actively in the response to hyperosmotic and heat shock by preventing the aggregation of stress-denatured proteins, in association with DnaK and GrpE. It is the nucleotide exchange factor for DnaK and may function as a thermosensor. Unfolded proteins bind initially to DnaJ; upon interaction with the DnaJ-bound protein, DnaK hydrolyzes its bound ATP, resulting in the formation of a stable complex. GrpE releases ADP from DnaK; ATP binding to DnaK triggers the release of the substrate protein, thus completing the reaction cycle. Several rounds of ATP-dependent interactions between DnaJ, DnaK and GrpE are required for fully efficient folding. The chain is Protein GrpE from Streptococcus suis (strain 98HAH33).